The primary structure comprises 240 residues: Glycerol uptake facilitator protein 3 (240 aa).

2 helical membrane-spanning segments follow: residues 11–31 (LGEF…VAGV) and 41–61 (AGWV…VYAS). An NPA 1 motif is present at residues 70–72 (NPA). The next 3 membrane-spanning stretches (helical) occupy residues 88–108 (VIPY…VVWL), 137–157 (FWNF…LLAF), and 162–182 (FTAG…GLSL). Positions 191-193 (NPA) match the NPA 2 motif. The chain crosses the membrane as a helical span at residues 219 to 239 (WVPIAGPLVGGALGALLFNVL).

The protein belongs to the MIP/aquaporin (TC 1.A.8) family.

The protein resides in the cell membrane. Its function is as follows. Transporter that facilitates the transmembrane diffusion of water, dihydroxyacetone, glycerol and H(2)O(2). Is not permeable to urea and D/L-lactic acid. This chain is Glycerol uptake facilitator protein 3, found in Lactiplantibacillus plantarum (strain ATCC BAA-793 / NCIMB 8826 / WCFS1) (Lactobacillus plantarum).